We begin with the raw amino-acid sequence, 470 residues long: Serine hydroxymethyltransferase 5 (470 aa).

An N6-(pyridoxal phosphate)lysine modification is found at K244.

This sequence belongs to the SHMT family. Homotetramer. Pyridoxal 5'-phosphate serves as cofactor.

Its subcellular location is the cytoplasm. It carries out the reaction (6R)-5,10-methylene-5,6,7,8-tetrahydrofolate + glycine + H2O = (6S)-5,6,7,8-tetrahydrofolate + L-serine. It functions in the pathway one-carbon metabolism; tetrahydrofolate interconversion. Functionally, catalyzes the interconversion of serine and glycine. This is Serine hydroxymethyltransferase 5 (SHM5) from Arabidopsis thaliana (Mouse-ear cress).